A 441-amino-acid polypeptide reads, in one-letter code: 3-phosphoshikimate 1-carboxyvinyltransferase (441 aa).

Positions 1-24 are disordered; it reads MSGTGQSDDPRELKAGGSLQGRVK. 3-phosphoshikimate-binding residues include Lys29, Ser30, and Arg34. Residue Lys29 coordinates phosphoenolpyruvate. Gly103 and Arg132 together coordinate phosphoenolpyruvate. 3-phosphoshikimate is bound by residues Ser177, Gln179, Asp328, and Lys355. Gln179 serves as a coordination point for phosphoenolpyruvate. Asp328 serves as the catalytic Proton acceptor. Phosphoenolpyruvate contacts are provided by Arg359 and Arg401.

This sequence belongs to the EPSP synthase family. Monomer.

Its subcellular location is the cytoplasm. The catalysed reaction is 3-phosphoshikimate + phosphoenolpyruvate = 5-O-(1-carboxyvinyl)-3-phosphoshikimate + phosphate. The protein operates within metabolic intermediate biosynthesis; chorismate biosynthesis; chorismate from D-erythrose 4-phosphate and phosphoenolpyruvate: step 6/7. In terms of biological role, catalyzes the transfer of the enolpyruvyl moiety of phosphoenolpyruvate (PEP) to the 5-hydroxyl of shikimate-3-phosphate (S3P) to produce enolpyruvyl shikimate-3-phosphate and inorganic phosphate. This Synechococcus sp. (strain CC9605) protein is 3-phosphoshikimate 1-carboxyvinyltransferase.